The following is a 504-amino-acid chain: ATP synthase subunit alpha 2 (504 aa).

Position 169-176 (169-176) interacts with ATP; the sequence is GDRQTGKT.

It belongs to the ATPase alpha/beta chains family. In terms of assembly, F-type ATPases have 2 components, CF(1) - the catalytic core - and CF(0) - the membrane proton channel. CF(1) has five subunits: alpha(3), beta(3), gamma(1), delta(1), epsilon(1). CF(0) has three main subunits: a(1), b(2) and c(9-12). The alpha and beta chains form an alternating ring which encloses part of the gamma chain. CF(1) is attached to CF(0) by a central stalk formed by the gamma and epsilon chains, while a peripheral stalk is formed by the delta and b chains.

It localises to the cell membrane. It carries out the reaction ATP + H2O + 4 H(+)(in) = ADP + phosphate + 5 H(+)(out). In terms of biological role, produces ATP from ADP in the presence of a proton gradient across the membrane. The alpha chain is a regulatory subunit. This Listeria innocua serovar 6a (strain ATCC BAA-680 / CLIP 11262) protein is ATP synthase subunit alpha 2.